The primary structure comprises 640 residues: Scarecrow-like protein 27 (640 aa).

Low complexity-rich tracts occupy residues 68–79 and 86–98; these read SYSSTTTTLSSS and TVTN…GDDN. A disordered region spans residues 68-98; that stretch reads SYSSTTTTLSSSHGGGGTTVTNTTVTAGDDN. The GRAS domain maps to 259–639; it reads GMAGDDQSVI…KELVTVSAWK (381 aa). A leucine repeat I (LRI) region spans residues 266-331; the sequence is SVIIEQLFNA…AEALLSLIHN (66 aa). Residues 350–422 are VHIID; that stretch reads YRSFSETSPF…NRASSLKLTV (73 aa). The VHIID motif lies at 383 to 387; it reads IHIID. The interval 438-470 is leucine repeat II (LRII); sequence FTEENLKTFAGEVKIPFEIELLSVELLLNPAYW. The PFYRE stretch occupies residues 480–565; it reads EAIAVNLPVN…RFWVQPSIEK (86 aa). The segment at 568–639 is SAW; it reads MKRHRWIERS…KELVTVSAWK (72 aa).

This sequence belongs to the GRAS family. Expressed in seedlings, roots, cotyledons, leaves and flowers.

The protein localises to the nucleus. Its function is as follows. Probable transcription factor involved in plant development. The protein is Scarecrow-like protein 27 (SCL27) of Arabidopsis thaliana (Mouse-ear cress).